The primary structure comprises 145 residues: D-aminoacyl-tRNA deacylase (145 aa).

Residues 137–138 carry the Gly-cisPro motif, important for rejection of L-amino acids motif; the sequence is GP.

The protein belongs to the DTD family. Homodimer.

It localises to the cytoplasm. The enzyme catalyses glycyl-tRNA(Ala) + H2O = tRNA(Ala) + glycine + H(+). It catalyses the reaction a D-aminoacyl-tRNA + H2O = a tRNA + a D-alpha-amino acid + H(+). Its function is as follows. An aminoacyl-tRNA editing enzyme that deacylates mischarged D-aminoacyl-tRNAs. Also deacylates mischarged glycyl-tRNA(Ala), protecting cells against glycine mischarging by AlaRS. Acts via tRNA-based rather than protein-based catalysis; rejects L-amino acids rather than detecting D-amino acids in the active site. By recycling D-aminoacyl-tRNA to D-amino acids and free tRNA molecules, this enzyme counteracts the toxicity associated with the formation of D-aminoacyl-tRNA entities in vivo and helps enforce protein L-homochirality. In Pseudomonas fluorescens (strain Pf0-1), this protein is D-aminoacyl-tRNA deacylase.